Consider the following 280-residue polypeptide: Protease HtpX (280 aa).

The next 2 membrane-spanning stretches (helical) occupy residues 7 to 26 (TFILLASLTALLVVIGGLLG) and 30 to 49 (GMLVALLFAGIMNFSAYWYS). Residue histidine 129 coordinates Zn(2+). The active site involves glutamate 130. Histidine 133 contacts Zn(2+). 2 helical membrane passes run 146–166 (ATIAGAISGIANMFMWLSMFG) and 178–198 (VVGMIMMIVAPLAAGLIQMAI). Position 203 (glutamate 203) interacts with Zn(2+).

Belongs to the peptidase M48B family. Zn(2+) serves as cofactor.

Its subcellular location is the cell inner membrane. The protein is Protease HtpX of Legionella pneumophila (strain Corby).